Reading from the N-terminus, the 321-residue chain is 4-hydroxy-3-methylbut-2-enyl diphosphate reductase (321 aa).

Cys13 lines the [4Fe-4S] cluster pocket. (2E)-4-hydroxy-3-methylbut-2-enyl diphosphate-binding residues include His41 and His75. Residues His41 and His75 each coordinate dimethylallyl diphosphate. Isopentenyl diphosphate contacts are provided by His41 and His75. Cys97 contacts [4Fe-4S] cluster. His125 provides a ligand contact to (2E)-4-hydroxy-3-methylbut-2-enyl diphosphate. His125 contributes to the dimethylallyl diphosphate binding site. His125 serves as a coordination point for isopentenyl diphosphate. The active-site Proton donor is Glu127. A (2E)-4-hydroxy-3-methylbut-2-enyl diphosphate-binding site is contributed by Thr168. Residue Cys225 coordinates [4Fe-4S] cluster. (2E)-4-hydroxy-3-methylbut-2-enyl diphosphate-binding residues include Ser253, Ser254, Asn255, and Ser302. Residues Ser253, Ser254, Asn255, and Ser302 each contribute to the dimethylallyl diphosphate site. 4 residues coordinate isopentenyl diphosphate: Ser253, Ser254, Asn255, and Ser302.

It belongs to the IspH family. The cofactor is [4Fe-4S] cluster.

The catalysed reaction is isopentenyl diphosphate + 2 oxidized [2Fe-2S]-[ferredoxin] + H2O = (2E)-4-hydroxy-3-methylbut-2-enyl diphosphate + 2 reduced [2Fe-2S]-[ferredoxin] + 2 H(+). The enzyme catalyses dimethylallyl diphosphate + 2 oxidized [2Fe-2S]-[ferredoxin] + H2O = (2E)-4-hydroxy-3-methylbut-2-enyl diphosphate + 2 reduced [2Fe-2S]-[ferredoxin] + 2 H(+). It functions in the pathway isoprenoid biosynthesis; dimethylallyl diphosphate biosynthesis; dimethylallyl diphosphate from (2E)-4-hydroxy-3-methylbutenyl diphosphate: step 1/1. Its pathway is isoprenoid biosynthesis; isopentenyl diphosphate biosynthesis via DXP pathway; isopentenyl diphosphate from 1-deoxy-D-xylulose 5-phosphate: step 6/6. Catalyzes the conversion of 1-hydroxy-2-methyl-2-(E)-butenyl 4-diphosphate (HMBPP) into a mixture of isopentenyl diphosphate (IPP) and dimethylallyl diphosphate (DMAPP). Acts in the terminal step of the DOXP/MEP pathway for isoprenoid precursor biosynthesis. The polypeptide is 4-hydroxy-3-methylbut-2-enyl diphosphate reductase (Pelodictyon phaeoclathratiforme (strain DSM 5477 / BU-1)).